The chain runs to 352 residues: MTADSCNPCLTLENTIDVQEVPMTKSVVLADPRGFCAGVDRAILTVQTILKAAEASGKRTREDGLPPVYVRRQIVHNKHVVEDLAGQGAVFVQELAEIPDAAAQAGIPVVFSAHGVSPVVKAEAERRGMHVVDATCPLVGKVHREVLRFVREGYEIVYIGHKGHDEAVGVVGESPEHVHLIEHESDVDSLDFAPDTKLVLLSQTTLSVDETADTIAALKAKFPWIQEPPSSDICYATSNRQAAVKLVAQQSDCVVIVGSANSSNSVRLMEVAQEGLGERGKAYRVDDASELDPAWFEGLESVGISSGASVPDELVSGVIDALQNLGFTGMKSVETIKENMHFVLPAELRRKK.

Cys36 serves as a coordination point for [4Fe-4S] cluster. 2 residues coordinate (2E)-4-hydroxy-3-methylbut-2-enyl diphosphate: His76 and His114. Dimethylallyl diphosphate is bound by residues His76 and His114. Residues His76 and His114 each coordinate isopentenyl diphosphate. Residue Cys136 participates in [4Fe-4S] cluster binding. His164 is a binding site for (2E)-4-hydroxy-3-methylbut-2-enyl diphosphate. Residue His164 participates in dimethylallyl diphosphate binding. An isopentenyl diphosphate-binding site is contributed by His164. The Proton donor role is filled by Glu166. Thr204 contributes to the (2E)-4-hydroxy-3-methylbut-2-enyl diphosphate binding site. Cys234 lines the [4Fe-4S] cluster pocket. Positions 262, 263, 264, and 309 each coordinate (2E)-4-hydroxy-3-methylbut-2-enyl diphosphate. Dimethylallyl diphosphate-binding residues include Ser262, Ser263, Asn264, and Ser309. Ser262, Ser263, Asn264, and Ser309 together coordinate isopentenyl diphosphate.

This sequence belongs to the IspH family. It depends on [4Fe-4S] cluster as a cofactor.

The enzyme catalyses isopentenyl diphosphate + 2 oxidized [2Fe-2S]-[ferredoxin] + H2O = (2E)-4-hydroxy-3-methylbut-2-enyl diphosphate + 2 reduced [2Fe-2S]-[ferredoxin] + 2 H(+). It catalyses the reaction dimethylallyl diphosphate + 2 oxidized [2Fe-2S]-[ferredoxin] + H2O = (2E)-4-hydroxy-3-methylbut-2-enyl diphosphate + 2 reduced [2Fe-2S]-[ferredoxin] + 2 H(+). It functions in the pathway isoprenoid biosynthesis; dimethylallyl diphosphate biosynthesis; dimethylallyl diphosphate from (2E)-4-hydroxy-3-methylbutenyl diphosphate: step 1/1. It participates in isoprenoid biosynthesis; isopentenyl diphosphate biosynthesis via DXP pathway; isopentenyl diphosphate from 1-deoxy-D-xylulose 5-phosphate: step 6/6. Functionally, catalyzes the conversion of 1-hydroxy-2-methyl-2-(E)-butenyl 4-diphosphate (HMBPP) into a mixture of isopentenyl diphosphate (IPP) and dimethylallyl diphosphate (DMAPP). Acts in the terminal step of the DOXP/MEP pathway for isoprenoid precursor biosynthesis. The polypeptide is 4-hydroxy-3-methylbut-2-enyl diphosphate reductase (Bifidobacterium longum (strain NCC 2705)).